The following is an 898-amino-acid chain: Protein SOV1, mitochondrial (898 aa).

The N-terminal 31 residues, 1–31 (MFKYNRSLCSSALIAKSQIRFYRLKRAPLNY), are a transit peptide targeting the mitochondrion.

It localises to the mitochondrion. The chain is Protein SOV1, mitochondrial (SOV1) from Saccharomyces cerevisiae (strain ATCC 204508 / S288c) (Baker's yeast).